We begin with the raw amino-acid sequence, 720 residues long: Denticleless protein homolog (720 aa).

3 WD repeats span residues 43–85 (GMPV…TTKL), 92–131 (AHSN…LLGI), and 134–174 (GHQC…KDGF). The short motif at 164–167 (WDTR) is the DDB1-binding motif element. The Nuclear localization signal signature appears at 193-200 (PSKLRKKR). WD repeat units follow at residues 211-250 (DFQQ…AAYR), 266-305 (TRKL…TFPV), 310-351 (GHQN…LPPR), and 355-395 (GHSQ…EEEK). A DDB1-binding motif motif is present at residues 240 to 243 (WDLR). Disordered regions lie at residues 411 to 437 (KPEE…VGSP), 476 to 495 (PAKL…PSSK), 528 to 552 (QSLL…KRRL), and 607 to 698 (NEHE…TSPK). Positions 528–542 (QSLLETSSTPKAQHS) are enriched in polar residues. 2 stretches are compositionally biased toward basic and acidic residues: residues 543–552 (QAEKRAKRRL) and 642–660 (CERD…ERKN).

The protein belongs to the WD repeat cdt2 family. In terms of assembly, component of the DCX(DTL) E3 ubiquitin ligase complex, at least composed of CUL4 (CUL4A or CUL4B), DDB1, DTL/CDT2 and RBX1.

Its subcellular location is the nucleus. It localises to the cytoplasm. The protein localises to the cytoskeleton. The protein resides in the microtubule organizing center. It is found in the centrosome. Its subcellular location is the chromosome. The protein operates within protein modification; protein ubiquitination. Substrate-specific adapter of a DCX (DDB1-CUL4-X-box) E3 ubiquitin-protein ligase complex required for cell cycle control, DNA damage response and translesion DNA synthesis. The DCX(DTL) complex, also named CRL4(CDT2) complex, mediates the polyubiquitination and subsequent degradation of CDT1, CDKN1A/p21(CIP1), KMT5A and SDE2. CDT1 degradation in response to DNA damage is necessary to ensure proper cell cycle regulation of DNA replication. CDKN1A/p21(CIP1) degradation during S phase or following UV irradiation is essential to control replication licensing. KMT5A degradation is also important for a proper regulation of mechanisms such as TGF-beta signaling, cell cycle progression, DNA repair and cell migration. Most substrates require their interaction with PCNA for their polyubiquitination: substrates interact with PCNA via their PIP-box, and those containing the 'K+4' motif in the PIP box, recruit the DCX(DTL) complex, leading to their degradation. In undamaged proliferating cells, the DCX(DTL) complex also promotes the 'Lys-164' monoubiquitination of PCNA, thereby being involved in PCNA-dependent translesion DNA synthesis. May play a role in the regulation of the circadian clock. The sequence is that of Denticleless protein homolog (DTL) from Gallus gallus (Chicken).